Reading from the N-terminus, the 436-residue chain is Histidinol dehydrogenase (436 aa).

Tyrosine 130, glutamine 191, and asparagine 214 together coordinate NAD(+). Residues serine 237, glutamine 259, and histidine 262 each coordinate substrate. Residues glutamine 259 and histidine 262 each contribute to the Zn(2+) site. Catalysis depends on proton acceptor residues glutamate 327 and histidine 328. Residues histidine 328, aspartate 361, glutamate 415, and histidine 420 each contribute to the substrate site. A Zn(2+)-binding site is contributed by aspartate 361. Histidine 420 is a binding site for Zn(2+).

This sequence belongs to the histidinol dehydrogenase family. It depends on Zn(2+) as a cofactor.

The enzyme catalyses L-histidinol + 2 NAD(+) + H2O = L-histidine + 2 NADH + 3 H(+). It participates in amino-acid biosynthesis; L-histidine biosynthesis; L-histidine from 5-phospho-alpha-D-ribose 1-diphosphate: step 9/9. In terms of biological role, catalyzes the sequential NAD-dependent oxidations of L-histidinol to L-histidinaldehyde and then to L-histidine. This Geobacter metallireducens (strain ATCC 53774 / DSM 7210 / GS-15) protein is Histidinol dehydrogenase.